Reading from the N-terminus, the 374-residue chain is Anhydro-N-acetylmuramic acid kinase (374 aa).

12-19 (GTSLDGVD) provides a ligand contact to ATP.

This sequence belongs to the anhydro-N-acetylmuramic acid kinase family.

The enzyme catalyses 1,6-anhydro-N-acetyl-beta-muramate + ATP + H2O = N-acetyl-D-muramate 6-phosphate + ADP + H(+). It functions in the pathway amino-sugar metabolism; 1,6-anhydro-N-acetylmuramate degradation. It participates in cell wall biogenesis; peptidoglycan recycling. In terms of biological role, catalyzes the specific phosphorylation of 1,6-anhydro-N-acetylmuramic acid (anhMurNAc) with the simultaneous cleavage of the 1,6-anhydro ring, generating MurNAc-6-P. Is required for the utilization of anhMurNAc either imported from the medium or derived from its own cell wall murein, and thus plays a role in cell wall recycling. The sequence is that of Anhydro-N-acetylmuramic acid kinase from Enterobacter sp. (strain 638).